We begin with the raw amino-acid sequence, 287 residues long: Large ribosomal subunit protein uL2 (287 aa).

Disordered regions lie at residues 1–30 (MGIR…DQPE) and 211–287 (NRWK…GRQS). Over residues 12–22 (GTRQKSVSDFS) the composition is skewed to polar residues. Basic residues-rich tracts occupy residues 211-220 (NRWKGRRPKV) and 258-287 (KTRK…GRQS).

The protein belongs to the universal ribosomal protein uL2 family. Part of the 50S ribosomal subunit. Forms a bridge to the 30S subunit in the 70S ribosome.

Its function is as follows. One of the primary rRNA binding proteins. Required for association of the 30S and 50S subunits to form the 70S ribosome, for tRNA binding and peptide bond formation. It has been suggested to have peptidyltransferase activity; this is somewhat controversial. Makes several contacts with the 16S rRNA in the 70S ribosome. The protein is Large ribosomal subunit protein uL2 of Cyanothece sp. (strain PCC 7425 / ATCC 29141).